The sequence spans 182 residues: Large ribosomal subunit protein uL6 (182 aa).

It belongs to the universal ribosomal protein uL6 family. As to quaternary structure, part of the 50S ribosomal subunit.

Its function is as follows. This protein binds to the 23S rRNA, and is important in its secondary structure. It is located near the subunit interface in the base of the L7/L12 stalk, and near the tRNA binding site of the peptidyltransferase center. This chain is Large ribosomal subunit protein uL6, found in Haloquadratum walsbyi (strain DSM 16790 / HBSQ001).